A 256-amino-acid chain; its full sequence is MSDPRKAQEQEPTTHFGFQDVPESQKAEKVAEVFHSVAAKYDLMNDVLSGGLHRLWKRFTIELSGVRPGNRVLDIAGGTGDLTRKFASIVGPTGEVVLADINDSMLKVGRDRLLDKGVAGNVQFVQADAEKLPFPDNHFDVVTIAFGLRNVTHKEDALRSMLRVLKPGGRLLVLEFSKPGNPLLAKVYDTYSFSFMPLAGKLITNDADSYRYLAESIRMHPDQETLKAMMVDAGFERVTYHNMTGGIVALHRGIKP.

S-adenosyl-L-methionine contacts are provided by residues Thr79, Asp100, and 128–129 (DA).

It belongs to the class I-like SAM-binding methyltransferase superfamily. MenG/UbiE family.

The catalysed reaction is a 2-demethylmenaquinol + S-adenosyl-L-methionine = a menaquinol + S-adenosyl-L-homocysteine + H(+). The enzyme catalyses a 2-methoxy-6-(all-trans-polyprenyl)benzene-1,4-diol + S-adenosyl-L-methionine = a 5-methoxy-2-methyl-3-(all-trans-polyprenyl)benzene-1,4-diol + S-adenosyl-L-homocysteine + H(+). It participates in quinol/quinone metabolism; menaquinone biosynthesis; menaquinol from 1,4-dihydroxy-2-naphthoate: step 2/2. Its pathway is cofactor biosynthesis; ubiquinone biosynthesis. In terms of biological role, methyltransferase required for the conversion of demethylmenaquinol (DMKH2) to menaquinol (MKH2) and the conversion of 2-polyprenyl-6-methoxy-1,4-benzoquinol (DDMQH2) to 2-polyprenyl-3-methyl-6-methoxy-1,4-benzoquinol (DMQH2). The polypeptide is Ubiquinone/menaquinone biosynthesis C-methyltransferase UbiE (Ectopseudomonas mendocina (strain ymp) (Pseudomonas mendocina)).